The primary structure comprises 244 residues: 1-(5-phosphoribosyl)-5-[(5-phosphoribosylamino)methylideneamino] imidazole-4-carboxamide isomerase (244 aa).

Asp-10 (proton acceptor) is an active-site residue. Asp-132 functions as the Proton donor in the catalytic mechanism.

This sequence belongs to the HisA/HisF family.

Its subcellular location is the cytoplasm. It carries out the reaction 1-(5-phospho-beta-D-ribosyl)-5-[(5-phospho-beta-D-ribosylamino)methylideneamino]imidazole-4-carboxamide = 5-[(5-phospho-1-deoxy-D-ribulos-1-ylimino)methylamino]-1-(5-phospho-beta-D-ribosyl)imidazole-4-carboxamide. The protein operates within amino-acid biosynthesis; L-histidine biosynthesis; L-histidine from 5-phospho-alpha-D-ribose 1-diphosphate: step 4/9. The chain is 1-(5-phosphoribosyl)-5-[(5-phosphoribosylamino)methylideneamino] imidazole-4-carboxamide isomerase from Stenotrophomonas maltophilia (strain K279a).